Consider the following 150-residue polypeptide: Glycophorin-A (150 aa).

The first 19 residues, 1-19, serve as a signal peptide directing secretion; that stretch reads MYGKIIFVLLLSEIVSISA. The Extracellular portion of the chain corresponds to 20-91; that stretch reads LSTTEVAMHT…QLAHHFSEPE (72 aa). O-linked (GalNAc...) serine glycosylation is present at Ser-21. Residues Thr-22, Thr-23, and Thr-29 are each glycosylated (O-linked (GalNAc...) threonine). O-linked (GalNAc...) serine glycosylation occurs at Ser-30. Thr-31 carries O-linked (GalNAc...) threonine glycosylation. Residue Ser-32 is glycosylated (O-linked (GalNAc...) serine). Thr-36 is a glycosylation site (O-linked (GalNAc...) threonine). O-linked (GalNAc...) serine glycosylation is found at Ser-38 and Ser-41. O-linked (GalNAc...) threonine glycosylation occurs at Thr-44. Residue Asn-45 is glycosylated (N-linked (GlcNAc...) asparagine). Residues Thr-52 and Thr-56 are each glycosylated (O-linked (GalNAc...) threonine). Ser-63 and Ser-66 each carry an O-linked (GalNAc...) serine glycan. Residue Thr-69 is glycosylated (O-linked (GalNAc...) threonine). A helical transmembrane segment spans residues 92–114; sequence ITLIIFGVMAGVIGTILLISYGI. At 115-150 the chain is on the cytoplasmic side; sequence RRLIKKSPSDVKPLPSPDTDVPLSSVEIENPETSDQ. The tract at residues 121–150 is disordered; the sequence is SPSDVKPLPSPDTDVPLSSVEIENPETSDQ. Phosphothreonine is present on Thr-133. Residues Ser-138 and Ser-148 each carry the phosphoserine modification.

The protein belongs to the glycophorin A family. Homodimer. Component of the ankyrin-1 complex in the erythrocyte, composed of ANK1, RHCE, RHAG, SLC4A1, EPB42, GYPA, GYPB and AQP1. Interacts with SLC4A1; a GYPA monomer is bound at each end of the SLC4A1 dimer forming a heterotetramer. As to quaternary structure, (Microbial infection) Interacts with Streptococcus gordonii hsa protein. In terms of assembly, (Microbial infection) Interacts (in a sialic acid-independent manner) with P.falciparum MSP1 subunit p83. Post-translationally, the major O-linked glycan are NeuAc-alpha-(2-3)-Gal-beta-(1-3)-[NeuAc-alpha-(2-6)]-GalNAcOH (about 78 %) and NeuAc-alpha-(2-3)-Gal-beta-(1-3)-GalNAcOH (17 %). Minor O-glycans (5 %) include NeuAc-alpha-(2-3)-Gal-beta-(1-3)-[NeuAc-alpha-(2-6)]-GalNAcOH NeuAc-alpha-(2-8)-NeuAc-alpha-(2-3)-Gal-beta-(1-3)-GalNAcOH. About 1% of all O-linked glycans carry blood group A, B and H determinants. They derive from a type-2 precursor core structure, Gal-beta-(1,3)-GlcNAc-beta-1-R, and the antigens are synthesized by addition of fucose (H antigen-specific) and then N-acetylgalactosamine (A antigen-specific) or galactose (B antigen-specific). Specifically O-linked-glycans are NeuAc-alpha-(2-3)-Gal-beta-(1-3)-GalNAcOH-(6-1)-GlcNAc-beta-(4-1)-[Fuc-alpha-(1-2)]-Gal-beta-(3-1)-GalNAc-alpha (about 1%, B antigen-specific) and NeuAc-alpha-(2-3)-Gal-beta-(1-3)-GalNAcOH-(6-1)-GlcNAc-beta-(4-1)-[Fuc-alpha-(1-2)]-Gal-beta (1 %, O antigen-, A antigen- and B antigen-specific).

It is found in the cell membrane. In terms of biological role, component of the ankyrin-1 complex, a multiprotein complex involved in the stability and shape of the erythrocyte membrane. Glycophorin A is the major intrinsic membrane protein of the erythrocyte. The N-terminal glycosylated segment, which lies outside the erythrocyte membrane, has MN blood group receptors. Appears to be important for the function of SLC4A1 and is required for high activity of SLC4A1. May be involved in translocation of SLC4A1 to the plasma membrane. (Microbial infection) Appears to be a receptor for Hepatitis A virus (HAV). Its function is as follows. (Microbial infection) Receptor for P.falciparum erythrocyte-binding antigen 175 (EBA-175); binding of EBA-175 is dependent on sialic acid residues of the O-linked glycans. In Homo sapiens (Human), this protein is Glycophorin-A.